Here is a 464-residue protein sequence, read N- to C-terminus: Cysteine--tRNA ligase (464 aa).

Position 29 (cysteine 29) interacts with Zn(2+). The 'HIGH' region signature appears at 31–41; sequence ATVQGDPHIGH. Cysteine 207, histidine 232, and glutamate 236 together coordinate Zn(2+). Residues 263–267 carry the 'KMSKS' region motif; it reads KMSKS. Position 266 (lysine 266) interacts with ATP.

Belongs to the class-I aminoacyl-tRNA synthetase family. In terms of assembly, monomer. Zn(2+) serves as cofactor.

The protein resides in the cytoplasm. The catalysed reaction is tRNA(Cys) + L-cysteine + ATP = L-cysteinyl-tRNA(Cys) + AMP + diphosphate. The protein is Cysteine--tRNA ligase of Rhodococcus opacus (strain B4).